The chain runs to 94 residues: Co-chaperonin GroES (94 aa).

This sequence belongs to the GroES chaperonin family. In terms of assembly, heptamer of 7 subunits arranged in a ring. Interacts with the chaperonin GroEL.

It localises to the cytoplasm. Its function is as follows. Together with the chaperonin GroEL, plays an essential role in assisting protein folding. The GroEL-GroES system forms a nano-cage that allows encapsulation of the non-native substrate proteins and provides a physical environment optimized to promote and accelerate protein folding. GroES binds to the apical surface of the GroEL ring, thereby capping the opening of the GroEL channel. This chain is Co-chaperonin GroES, found in Streptococcus mitis.